The sequence spans 56 residues: Small ribosomal subunit protein uS14 (56 aa).

Cysteine 21, cysteine 24, cysteine 39, and cysteine 42 together coordinate Zn(2+).

This sequence belongs to the universal ribosomal protein uS14 family. Zn(2+) serves as cofactor.

This is Small ribosomal subunit protein uS14 (RPS29) from Candida glabrata (strain ATCC 2001 / BCRC 20586 / JCM 3761 / NBRC 0622 / NRRL Y-65 / CBS 138) (Yeast).